Consider the following 367-residue polypeptide: MWRGSSAGGSQGAAMEGTGGELGGQGNWGLEDAPGLLARASLPIMPAWPLPLASSALTLLLGALTSLFLWYCYRLGSQDMQALGTGSRAGAVGGRPGGCSEAGRPSPGRSGESGEGPRTEGLMSRRLRAYARRYSWAGMGRVRRAAQGGPSPGGGPGVLGIQRPGLLFLPDLPSAPFVPREAQRHDVELLESSFPAILRDFGAVSWDFSGTTPPPRGWSPPLAPGCYQLLLYQAGRCQPSNCRRCPGAYRALRGLRSFMSANTFGNAGFSVLLPGARLEGRCGPTNARVRCHLGLKIPPGCELVVGGEPQCWAEGHCLLVDDSFLYTVAHNGSPEDGPRVVFIVDLWHPNVAGAERQALDFVFAPDP.

Positions 1–27 (MWRGSSAGGSQGAAMEGTGGELGGQGN) are disordered. Topologically, residues 1-49 (MWRGSSAGGSQGAAMEGTGGELGGQGNWGLEDAPGLLARASLPIMPAWP) are cytoplasmic. A helical membrane pass occupies residues 50–72 (LPLASSALTLLLGALTSLFLWYC). Over 73 to 367 (YRLGSQDMQA…ALDFVFAPDP (295 aa)) the chain is Lumenal. Residues 88–122 (RAGAVGGRPGGCSEAGRPSPGRSGESGEGPRTEGL) form a disordered region. Residue Ser106 is modified to Phosphoserine.

Belongs to the aspartyl/asparaginyl beta-hydroxylase family.

It localises to the membrane. In Bos taurus (Bovine), this protein is Aspartate beta-hydroxylase domain-containing protein 1 (ASPHD1).